A 610-amino-acid polypeptide reads, in one-letter code: UvrABC system protein C (610 aa).

Positions 16-94 (SQPGVYRMYD…IKLYQPRYNV (79 aa)) constitute a GIY-YIG domain. Residues 204 to 239 (DQVLTQLIARMEKASQDLAFEEAARIRDQIQAVRRV) form the UVR domain.

This sequence belongs to the UvrC family. In terms of assembly, interacts with UvrB in an incision complex.

The protein resides in the cytoplasm. Functionally, the UvrABC repair system catalyzes the recognition and processing of DNA lesions. UvrC both incises the 5' and 3' sides of the lesion. The N-terminal half is responsible for the 3' incision and the C-terminal half is responsible for the 5' incision. This chain is UvrABC system protein C, found in Salmonella paratyphi C (strain RKS4594).